The following is a 187-amino-acid chain: Probable chorismate pyruvate-lyase (187 aa).

Residues arginine 81, leucine 119, and glutamate 178 each coordinate substrate.

Belongs to the UbiC family.

The protein resides in the cytoplasm. The enzyme catalyses chorismate = 4-hydroxybenzoate + pyruvate. It functions in the pathway cofactor biosynthesis; ubiquinone biosynthesis. In terms of biological role, removes the pyruvyl group from chorismate, with concomitant aromatization of the ring, to provide 4-hydroxybenzoate (4HB) for the ubiquinone pathway. The polypeptide is Probable chorismate pyruvate-lyase (Thiobacillus denitrificans (strain ATCC 25259 / T1)).